Reading from the N-terminus, the 103-residue chain is Histone H4 (103 aa).

Gly residues predominate over residues 1–14 (MSGRGKGGKGLGKG). Residues 1 to 20 (MSGRGKGGKGLGKGGAKRHR) form a disordered region. Ser-2 is modified (N-acetylserine). An N6-acetyl-N6-methyllysine; alternate mark is found at Lys-6 and Lys-13. N6-acetyllysine is present on Lys-17. Residues 17–21 (KRHRR) mediate DNA binding.

Belongs to the histone H4 family. The nucleosome is a histone octamer containing two molecules each of H2A, H2B, H3 and H4 assembled in one H3-H4 heterotetramer and two H2A-H2B heterodimers. The octamer wraps approximately 147 bp of DNA.

Its subcellular location is the nucleus. It localises to the chromosome. Functionally, core component of nucleosome. Nucleosomes wrap and compact DNA into chromatin, limiting DNA accessibility to the cellular machineries which require DNA as a template. Histones thereby play a central role in transcription regulation, DNA repair, DNA replication and chromosomal stability. DNA accessibility is regulated via a complex set of post-translational modifications of histones, also called histone code, and nucleosome remodeling. The sequence is that of Histone H4 from Mytilus chilensis (Chilean blue mussel).